The primary structure comprises 400 residues: MGKEIKKVVLAYSGGLDTSVILKWIAKTYDCEVVTLTADLGQEEDLDGVDEKALRTGATRAYVEDLREEFARDFIFPMMRACAIYEGRYLLGTSIARPLITRRLVEIAHAEGAQAVAHGATGKGNDQVRFELASAALDPSLKVIAPWREWDFRSRTDLLNFAAENDIPVISAGNRKLYSMDRNMLHCSFEGGELEDPWNEPGPGSYIMAVPVEQAPDEPEYITIDFEKGNAVAINGQAMSPAAIIKTLNTLGGKHGVGRLDMVENRFVGMKSRGVYETPGGTVLHAAHRDLEGICLDREALHLRDSLIPRYAAAVYNGFWYSPEREALQALVDKTQENVTGTVRVKLYKGNVVPVGRKSPYSLYRMDLATFEEDEVYNQADAAGFIRLNSLRIQGYGRRS.

ATP-binding positions include 11–19 and Ala-38; that span reads AYSGGLDTS. Residues Tyr-89 and Ser-94 each coordinate L-citrulline. Residue Gly-119 coordinates ATP. L-aspartate contacts are provided by Thr-121, Asn-125, and Asp-126. Asn-125 contributes to the L-citrulline binding site. Positions 129, 179, 188, 264, and 276 each coordinate L-citrulline.

Belongs to the argininosuccinate synthase family. Type 1 subfamily. In terms of assembly, homotetramer.

It localises to the cytoplasm. It carries out the reaction L-citrulline + L-aspartate + ATP = 2-(N(omega)-L-arginino)succinate + AMP + diphosphate + H(+). It participates in amino-acid biosynthesis; L-arginine biosynthesis; L-arginine from L-ornithine and carbamoyl phosphate: step 2/3. This chain is Argininosuccinate synthase, found in Oleidesulfovibrio alaskensis (strain ATCC BAA-1058 / DSM 17464 / G20) (Desulfovibrio alaskensis).